Here is a 309-residue protein sequence, read N- to C-terminus: Homoserine kinase (309 aa).

ATP is bound at residue P85–S95.

This sequence belongs to the GHMP kinase family. Homoserine kinase subfamily.

The protein localises to the cytoplasm. The catalysed reaction is L-homoserine + ATP = O-phospho-L-homoserine + ADP + H(+). It participates in amino-acid biosynthesis; L-threonine biosynthesis; L-threonine from L-aspartate: step 4/5. Its function is as follows. Catalyzes the ATP-dependent phosphorylation of L-homoserine to L-homoserine phosphate. This chain is Homoserine kinase, found in Thermoplasma volcanium (strain ATCC 51530 / DSM 4299 / JCM 9571 / NBRC 15438 / GSS1).